We begin with the raw amino-acid sequence, 311 residues long: 2-phospho-L-lactate transferase (311 aa).

7,8-didemethyl-8-hydroxy-5-deazariboflavin-binding residues include Asp-52 and Arg-91.

Belongs to the CofD family. In terms of assembly, homodimer. The cofactor is Mg(2+).

It catalyses the reaction (2S)-lactyl-2-diphospho-5'-guanosine + 7,8-didemethyl-8-hydroxy-5-deazariboflavin = oxidized coenzyme F420-0 + GMP + H(+). It participates in cofactor biosynthesis; coenzyme F420 biosynthesis. Inhibited by EDTA in vitro. In terms of biological role, catalyzes the transfer of the 2-phospholactate moiety from (2S)-lactyl-2-diphospho-5'-guanosine to 7,8-didemethyl-8-hydroxy-5-deazariboflavin (FO) with the formation of oxidized coenzyme F420-0 and GMP. The sequence is that of 2-phospho-L-lactate transferase from Methanocaldococcus jannaschii (strain ATCC 43067 / DSM 2661 / JAL-1 / JCM 10045 / NBRC 100440) (Methanococcus jannaschii).